The sequence spans 516 residues: Cytochrome P450 1A1 (516 aa).

Residues 25-36 form a mitochondrial targeting signal region; sequence FRPQVPKGLKSP. O-linked (GlcNAc) serine glycosylation occurs at S63. A substrate-binding site is contributed by F220. C453 is a heme binding site.

The protein belongs to the cytochrome P450 family. As to quaternary structure, interacts with cytosolic chaperones HSP70 and HSP90; this interaction is required for initial targeting to mitochondria. Interacts (via mitochondrial targeting signal) with TOMM40 (via N-terminus); this interaction is required for translocation across the mitochondrial outer membrane. Heme is required as a cofactor. As to expression, constitutively expressed in liver.

The protein localises to the endoplasmic reticulum membrane. It localises to the mitochondrion inner membrane. The protein resides in the microsome membrane. Its subcellular location is the cytoplasm. The catalysed reaction is an organic molecule + reduced [NADPH--hemoprotein reductase] + O2 = an alcohol + oxidized [NADPH--hemoprotein reductase] + H2O + H(+). The enzyme catalyses estrone + reduced [NADPH--hemoprotein reductase] + O2 = 2-hydroxyestrone + oxidized [NADPH--hemoprotein reductase] + H2O + H(+). It carries out the reaction estrone + reduced [NADPH--hemoprotein reductase] + O2 = 4-hydroxyestrone + oxidized [NADPH--hemoprotein reductase] + H2O + H(+). It catalyses the reaction estrone + reduced [NADPH--hemoprotein reductase] + O2 = 6alpha-hydroxyestrone + oxidized [NADPH--hemoprotein reductase] + H2O + H(+). The catalysed reaction is estrone + reduced [NADPH--hemoprotein reductase] + O2 = 15alpha-hydroxyestrone + oxidized [NADPH--hemoprotein reductase] + H2O + H(+). The enzyme catalyses estrone + reduced [NADPH--hemoprotein reductase] + O2 = 16alpha-hydroxyestrone + oxidized [NADPH--hemoprotein reductase] + H2O + H(+). It carries out the reaction 17beta-estradiol + reduced [NADPH--hemoprotein reductase] + O2 = 2-hydroxy-17beta-estradiol + oxidized [NADPH--hemoprotein reductase] + H2O + H(+). It catalyses the reaction 17beta-estradiol + reduced [NADPH--hemoprotein reductase] + O2 = 4-hydroxy-17beta-estradiol + oxidized [NADPH--hemoprotein reductase] + H2O + H(+). The catalysed reaction is 17beta-estradiol + reduced [NADPH--hemoprotein reductase] + O2 = 6alpha-hydroxy-17beta-estradiol + oxidized [NADPH--hemoprotein reductase] + H2O + H(+). The enzyme catalyses 17beta-estradiol + reduced [NADPH--hemoprotein reductase] + O2 = 7alpha-hydroxy-17beta-estradiol + oxidized [NADPH--hemoprotein reductase] + H2O + H(+). It carries out the reaction 17beta-estradiol + reduced [NADPH--hemoprotein reductase] + O2 = 15alpha-hydroxy-17beta-estradiol + oxidized [NADPH--hemoprotein reductase] + H2O + H(+). It catalyses the reaction (5Z,8Z,11Z)-eicosatrienoate + reduced [NADPH--hemoprotein reductase] + O2 = 19-hydroxy-(5Z,8Z,11Z)-eicosatrienoate + oxidized [NADPH--hemoprotein reductase] + H2O + H(+). The catalysed reaction is (5Z,8Z,11Z,14Z)-eicosatetraenoate + reduced [NADPH--hemoprotein reductase] + O2 = 16-hydroxy-(5Z,8Z,11Z,14Z)-eicosatetraenoate + oxidized [NADPH--hemoprotein reductase] + H2O + H(+). The enzyme catalyses (5Z,8Z,11Z,14Z)-eicosatetraenoate + reduced [NADPH--hemoprotein reductase] + O2 = 17-hydroxy-(5Z,8Z,11Z,14Z)-eicosatetraenoate + oxidized [NADPH--hemoprotein reductase] + H2O + H(+). It carries out the reaction (5Z,8Z,11Z,14Z)-eicosatetraenoate + reduced [NADPH--hemoprotein reductase] + O2 = 18-hydroxy-(5Z,8Z,11Z,14Z)-eicosatetraenoate + oxidized [NADPH--hemoprotein reductase] + H2O + H(+). It catalyses the reaction (5Z,8Z,11Z,14Z)-eicosatetraenoate + reduced [NADPH--hemoprotein reductase] + O2 = 19-hydroxy-(5Z,8Z,11Z,14Z)-eicosatetraenoate + oxidized [NADPH--hemoprotein reductase] + H2O + H(+). The catalysed reaction is (5Z,8Z,11Z,14Z,17Z)-eicosapentaenoate + reduced [NADPH--hemoprotein reductase] + O2 = 19-hydroxy-(5Z,8Z,11Z,14Z,17Z)-eicosapentaenoate + oxidized [NADPH--hemoprotein reductase] + H2O + H(+). The enzyme catalyses (5Z,8Z,11Z,14Z)-eicosatetraenoate + reduced [NADPH--hemoprotein reductase] + O2 = (8R,9S)-epoxy-(5Z,11Z,14Z)-eicosatrienoate + oxidized [NADPH--hemoprotein reductase] + H2O + H(+). It carries out the reaction (5Z,8Z,11Z,14Z)-eicosatetraenoate + reduced [NADPH--hemoprotein reductase] + O2 = (11R,12S)-epoxy-(5Z,8Z,14Z)-eicosatrienoate + oxidized [NADPH--hemoprotein reductase] + H2O + H(+). It catalyses the reaction (5Z,8Z,11Z,14Z)-eicosatetraenoate + reduced [NADPH--hemoprotein reductase] + O2 = (14S,15R)-epoxy-(5Z,8Z,11Z)-eicosatrienoate + oxidized [NADPH--hemoprotein reductase] + H2O + H(+). The catalysed reaction is (5Z,8Z,11Z,14Z)-eicosatetraenoate + reduced [NADPH--hemoprotein reductase] + O2 = (14R,15S)-epoxy-(5Z,8Z,11Z)-eicosatrienoate + oxidized [NADPH--hemoprotein reductase] + H2O + H(+). The enzyme catalyses (5Z,8Z,11Z,14Z,17Z)-eicosapentaenoate + reduced [NADPH--hemoprotein reductase] + O2 = (17R,18S)-epoxy-(5Z,8Z,11Z,14Z)-eicosatetraenoate + oxidized [NADPH--hemoprotein reductase] + H2O + H(+). It carries out the reaction (4Z,7Z,10Z,13Z,16Z,19Z)-docosahexaenoate + reduced [NADPH--hemoprotein reductase] + O2 = (19S,20R)-epoxy-(4Z,7Z,10Z,13Z,16Z)-docosapentaenoate + oxidized [NADPH--hemoprotein reductase] + H2O + H(+). It catalyses the reaction (4Z,7Z,10Z,13Z,16Z,19Z)-docosahexaenoate + reduced [NADPH--hemoprotein reductase] + O2 = (19R,20S)-epoxy-(4Z,7Z,10Z,13Z,16Z)-docosapentaenoate + oxidized [NADPH--hemoprotein reductase] + H2O + H(+). The catalysed reaction is all-trans-retinol + reduced [NADPH--hemoprotein reductase] + O2 = all-trans-retinal + oxidized [NADPH--hemoprotein reductase] + 2 H2O + H(+). The enzyme catalyses all-trans-retinal + reduced [NADPH--hemoprotein reductase] + O2 = all-trans-retinoate + oxidized [NADPH--hemoprotein reductase] + H2O + 2 H(+). It carries out the reaction (13S)-hydroperoxy-(9Z,11E)-octadecadienoate = 13-oxo-(9Z,11E)-octadecadienoate + H2O. It catalyses the reaction (12S)-hydroperoxy-(5Z,8Z,10E,14Z)-eicosatetraenoate = 12-oxo-(5Z,8Z,10E,14Z)-eicosatetraenoate + H2O. The catalysed reaction is (15S)-hydroperoxy-(5Z,8Z,11Z,13E)-eicosatetraenoate = 15-oxo-(5Z,8Z,11Z,13E)-eicosatetraenoate + H2O. The enzyme catalyses (5S)-hydroperoxy-(6E,8Z,11Z,14Z)-eicosatetraenoate = 5-oxo-(6E,8Z,11Z,14Z)-eicosatetraenoate + H2O. Its pathway is steroid hormone biosynthesis. The protein operates within lipid metabolism; fatty acid metabolism. It functions in the pathway cofactor metabolism; retinol metabolism. A cytochrome P450 monooxygenase involved in the metabolism of various endogenous substrates, including fatty acids, steroid hormones and vitamins. Mechanistically, uses molecular oxygen inserting one oxygen atom into a substrate, and reducing the second into a water molecule, with two electrons provided by NADPH via cytochrome P450 reductase (CPR; NADPH-ferrihemoprotein reductase). Catalyzes the hydroxylation of carbon-hydrogen bonds. Exhibits high catalytic activity for the formation of hydroxyestrogens from estrone (E1) and 17beta-estradiol (E2), namely 2-hydroxy E1 and E2, as well as D-ring hydroxylated E1 and E2 at the C15alpha and C16alpha positions. Displays different regioselectivities for polyunsaturated fatty acids (PUFA) hydroxylation. Catalyzes the epoxidation of double bonds of certain PUFA. Converts arachidonic acid toward epoxyeicosatrienoic acid (EET) regioisomers, 8,9-, 11,12-, and 14,15-EET, that function as lipid mediators in the vascular system. Displays an absolute stereoselectivity in the epoxidation of eicosapentaenoic acid (EPA) producing the 17(R),18(S) enantiomer. May play an important role in all-trans retinoic acid biosynthesis in extrahepatic tissues. Catalyzes two successive oxidative transformation of all-trans retinol to all-trans retinal and then to the active form all-trans retinoic acid. May also participate in eicosanoids metabolism by converting hydroperoxide species into oxo metabolites (lipoxygenase-like reaction, NADPH-independent). The polypeptide is Cytochrome P450 1A1 (CYP1A1) (Cavia porcellus (Guinea pig)).